A 131-amino-acid chain; its full sequence is Small ribosomal subunit protein uS9 (131 aa).

The protein belongs to the universal ribosomal protein uS9 family.

This chain is Small ribosomal subunit protein uS9, found in Haemophilus ducreyi (strain 35000HP / ATCC 700724).